We begin with the raw amino-acid sequence, 252 residues long: 3-dehydroquinate dehydratase (252 aa).

3-dehydroquinate contacts are provided by residues S21, 46–48 (EWR), and R82. H143 serves as the catalytic Proton donor/acceptor. K170 serves as the catalytic Schiff-base intermediate with substrate. R213, S232, and Q236 together coordinate 3-dehydroquinate.

This sequence belongs to the type-I 3-dehydroquinase family. In terms of assembly, homodimer.

The catalysed reaction is 3-dehydroquinate = 3-dehydroshikimate + H2O. It participates in metabolic intermediate biosynthesis; chorismate biosynthesis; chorismate from D-erythrose 4-phosphate and phosphoenolpyruvate: step 3/7. In terms of biological role, involved in the third step of the chorismate pathway, which leads to the biosynthesis of aromatic amino acids. Catalyzes the cis-dehydration of 3-dehydroquinate (DHQ) and introduces the first double bond of the aromatic ring to yield 3-dehydroshikimate. The sequence is that of 3-dehydroquinate dehydratase from Escherichia coli (strain K12 / MC4100 / BW2952).